Here is a 544-residue protein sequence, read N- to C-terminus: Membrane protein insertase YidC (544 aa).

The next 5 membrane-spanning stretches (helical) occupy residues asparagine 6–aspartate 26, lysine 343–valine 363, leucine 418–leucine 438, leucine 456–isoleucine 476, and proline 497–valine 517.

The protein belongs to the OXA1/ALB3/YidC family. Type 1 subfamily. Interacts with the Sec translocase complex via SecD. Specifically interacts with transmembrane segments of nascent integral membrane proteins during membrane integration.

The protein resides in the cell inner membrane. In terms of biological role, required for the insertion and/or proper folding and/or complex formation of integral membrane proteins into the membrane. Involved in integration of membrane proteins that insert both dependently and independently of the Sec translocase complex, as well as at least some lipoproteins. Aids folding of multispanning membrane proteins. In Pectobacterium atrosepticum (strain SCRI 1043 / ATCC BAA-672) (Erwinia carotovora subsp. atroseptica), this protein is Membrane protein insertase YidC.